The following is a 172-amino-acid chain: RNA silencing suppressor p19 (172 aa).

2 disordered regions span residues 1-38 (MEGAIQGSDAREQANSERWDGGCGGTITPFKLPDESPG) and 152-172 (VEGNVSRGRPEGAKAFEKESE). Basic and acidic residues-rich tracts occupy residues 9–20 (DAREQANSERWD) and 159–172 (GRPEGAKAFEKESE).

The protein belongs to the tombusvirus protein p19 family. In terms of assembly, homodimer.

In terms of biological role, viral suppressor of RNA silencing which binds specifically to silencing RNAs (siRNAs). Acts as a molecular caliper to specifically select siRNAs based on the length of the duplex region of the RNA. In Havel river virus (HaRV), this protein is RNA silencing suppressor p19.